The chain runs to 319 residues: Mas-related G-protein coupled receptor member D (319 aa).

Residues 1-30 (MNYTPYSSPAPGLTISPTMDPVTWVYFSVT) lie on the Extracellular side of the membrane. A helical transmembrane segment spans residues 31-51 (FLAMATCVCGIVGNSMVIWLL). Residues 52-64 (SFHRVQRSPFCTY) are Cytoplasmic-facing. A helical transmembrane segment spans residues 65–85 (VLNLAVADLLFLLCMASLLSL). Over 86 to 92 (ETGPLLT) the chain is Extracellular. A helical membrane pass occupies residues 93-113 (ASTSARVYEGMKRIKYFAYTA). Topologically, residues 114-144 (GLSLLTAISTQRCLSVLFPIWYKCHRPQHLS) are cytoplasmic. A helical membrane pass occupies residues 145-165 (GVVCGVLWALALLMNFLASFF). At 166-184 (CVQFWHPDKYQCFKVDMVF) the chain is on the extracellular side. The chain crosses the membrane as a helical span at residues 185–205 (NSLILGIFMPVMVLTSAIIFI). Residues 206 to 220 (RMRKNSLLQRRQPRR) are Cytoplasmic-facing. A helical membrane pass occupies residues 221–241 (LYVVILTSVLVFLTCSLPLGI). Residues 242 to 260 (NWFLLYWVELPQAVRLLYV) lie on the Extracellular side of the membrane. A helical transmembrane segment spans residues 261-281 (CSSRFSSSLSSSANPVIYFLV). Topologically, residues 282–319 (GSQKSHRLQESLGAVLGRALQDEPEGRETPSTCTNDGV) are cytoplasmic.

The protein belongs to the G-protein coupled receptor 1 family. Mas subfamily. In terms of tissue distribution, co-expressed in the small diameter neurons with P2X3 and VR1 in dorsal root ganglia.

It localises to the cell membrane. Its function is as follows. May regulate nociceptor function and/or development, including the sensation or modulation of pain. Functions as a specific membrane receptor for beta-alanine. The receptor couples with G-protein G(q) and G(i). This Rattus norvegicus (Rat) protein is Mas-related G-protein coupled receptor member D (Mrgprd).